A 371-amino-acid chain; its full sequence is Cytochrome b (371 aa).

A run of 4 helical transmembrane segments spans residues 25–45 (FGSM…FLAV), 69–90 (WMMQ…YIHI), 105–125 (WMSG…GYVL), and 170–190 (FFAL…LHII). Heme b is bound by residues histidine 75 and histidine 89. The heme b site is built by histidine 174 and histidine 188. Histidine 193 contributes to the a ubiquinone binding site. The next 4 membrane-spanning stretches (helical) occupy residues 218 to 238 (HKDL…VSFF), 280 to 300 (LGGA…PFTH), 312 to 332 (FSQL…WAAT), and 339 to 358 (FIVI…LLIP).

Belongs to the cytochrome b family. The cytochrome bc1 complex contains 3 respiratory subunits (MT-CYB, CYC1 and UQCRFS1), 2 core proteins (UQCRC1 and UQCRC2) and probably 6 low-molecular weight proteins. The cofactor is heme b.

The protein resides in the mitochondrion inner membrane. Functionally, component of the ubiquinol-cytochrome c reductase complex (complex III or cytochrome b-c1 complex) that is part of the mitochondrial respiratory chain. The b-c1 complex mediates electron transfer from ubiquinol to cytochrome c. Contributes to the generation of a proton gradient across the mitochondrial membrane that is then used for ATP synthesis. The chain is Cytochrome b (MT-CYB) from Leiopython albertisii (Northern white-lipped python).